A 478-amino-acid polypeptide reads, in one-letter code: Solute carrier family 2, facilitated glucose transporter member 8 (478 aa).

Residues 1–20 (MTPEDQEETQPLLRPPGGSA) are disordered. Topologically, residues 1–25 (MTPEDQEETQPLLRPPGGSAPRGRR) are cytoplasmic. Positions 11–20 (PLLRPPGGSA) are enriched in low complexity. The short motif at 12-13 (LL) is the Dileucine internalization motif element. The chain crosses the membrane as a helical span at residues 26–46 (VFLAAFAAALGPLSFGFALGY). At 47–70 (SSPAIPSLRRAAPPAPHLDEDAAS) the chain is on the extracellular side. The helical transmembrane segment at 71–91 (WFGAIVTLGAAAGGVLGGWLL) threads the bilayer. Topologically, residues 92–97 (DRAGRK) are cytoplasmic. The helical transmembrane segment at 98–118 (LSLVLCALPFVAGFAVITAAQ) threads the bilayer. At 119 to 127 (NLWMLLGGR) the chain is on the extracellular side. A helical membrane pass occupies residues 128–148 (LLTGLACGIASLVAPVYISEI). The Cytoplasmic portion of the chain corresponds to 149–158 (AYPEVRGLLG). Residues 159–179 (SCVQLMVVTGILLAYLAGWVL) traverse the membrane as a helical segment. Gln162 is a binding site for D-glucose. Topologically, residues 180 to 182 (EWR) are extracellular. The chain crosses the membrane as a helical span at residues 183–203 (WLAVLGCVPPSFMLLLMCFMP). At 204 to 257 (ETPRFLLSQHKHQEAMAAMQFLWGYAQGWEEPPLGAQHQDFHVAQLRRPGVYKP) the chain is on the cytoplasmic side. The helical transmembrane segment at 258-278 (FIIGISLMAFQQLSGVNAVMF) threads the bilayer. Residues 268-269 (QQ) and Asn274 contribute to the D-glucose site. Over 279-293 (YAETIFEEAKFKDSS) the chain is Extracellular. The chain crosses the membrane as a helical span at residues 294-314 (LASVVVGVIQVLFTATAALIM). Topologically, residues 315–320 (DRAGRR) are cytoplasmic. Residues 321-341 (LLLTLSGVVMVFSTSAFGTYF) traverse the membrane as a helical segment. Residues 342 to 368 (KLTEGGPSNSSHVDLPALVSMEAADTN) lie on the Extracellular side of the membrane. Asn350 carries an N-linked (GlcNAc...) asparagine glycan. The chain crosses the membrane as a helical span at residues 369–389 (VGLAWLAVGSMCLFIAGFAVG). The Cytoplasmic segment spans residues 390–405 (WGPIPWLLMSEIFPLH). Trp395 provides a ligand contact to D-glucose. The helical transmembrane segment at 406–426 (VKGVATGVCVLTNWFMAFLVT) threads the bilayer. Residues 427-439 (KEFSSLMEVLRPY) lie on the Extracellular side of the membrane. A helical transmembrane segment spans residues 440 to 460 (GAFWLASAFCIFGVLFTLACV). Residues 461 to 478 (PETKGKTLEQITAHFEGR) are Cytoplasmic-facing.

This sequence belongs to the major facilitator superfamily. Sugar transporter (TC 2.A.1.1) family. Glucose transporter subfamily. Interacts with AP2B1. In terms of tissue distribution, abundantly expressed in testis and more moderately in lung, kidney, spleen, intestine, skeletal muscle, liver and mammary gland.

The protein localises to the cell membrane. The protein resides in the cytoplasmic vesicle membrane. The catalysed reaction is D-glucose(out) = D-glucose(in). The enzyme catalyses D-fructose(out) = D-fructose(in). It catalyses the reaction L-dehydroascorbate(out) = L-dehydroascorbate(in). It carries out the reaction alpha,alpha-trehalose(in) = alpha,alpha-trehalose(out). Inhibited by cytochalasin B. In terms of biological role, insulin-regulated facilitative hexose transporter that mediates the transport of glucose and fructose. Facilitates hepatic influx of dietary trehalose, which in turn inhibits glucose and fructose influx triggering a starvation signal and hepatic autophagy through activation of AMPK and ULK1. Also able to mediate the transport of dehydroascorbate. The chain is Solute carrier family 2, facilitated glucose transporter member 8 from Bos taurus (Bovine).